A 440-amino-acid chain; its full sequence is MNKRLSRGKISLLASVFVTTTFMGGVNVLASTAKTGIRDITSQQVVKEMKVGWNLGNTMDATGGETNWGNPLTTHAMIDKVKAAGFNTLRLPITWDGHIGAAPDYAIDATWMNRVEEIANYAFDNNMYVIINLHHEDGWLKPYYANEAEVKAKITKVWTQIANRFKDYGDYLIFETMNEPRPVGAADEWSGGSYENRDMVNRYNLTAVNTIRATGGNNALRHIMVPTLAAAALSTTMNDYIVPNNDSRVIVSLHMYSPYFFSADLTSQWTTATWGSDADKAALSADFDAVYNKFVKNGRAVVIGEMGTINKNNLDSRVKHAEYYAKEATVRGITPIWWDNGYCVAGKEQTFGIFNRKNLTWCCPEVMQAFIRGAGATQTQTSYSLGDVNKDGKVNAIDYAVLKSILLGTNTNVDLSVSDMNKDGKVNALDLAVLKKMLLS.

A signal peptide spans Met1–Ala33. Glu179 acts as the Proton donor in catalysis. Glu305 serves as the catalytic Nucleophile. The region spanning Thr381–Ser440 is the Dockerin domain.

Belongs to the glycosyl hydrolase 5 (cellulase A) family.

It catalyses the reaction Endohydrolysis of (1-&gt;4)-beta-D-glucosidic linkages in cellulose, lichenin and cereal beta-D-glucans.. It carries out the reaction Endohydrolysis of (1-&gt;4)-beta-D-xylosidic linkages in xylans.. Its function is as follows. Has endoglucanase activity on carboxymethyl-cellulose (CMC), xylan and lichenan, but not Avicel. This is Endoglucanase B (engB) from Clostridium cellulovorans (strain ATCC 35296 / DSM 3052 / OCM 3 / 743B).